Reading from the N-terminus, the 475-residue chain is Ubiquilin-like protein (475 aa).

One can recognise a Ubiquitin-like domain in the interval 31–105; that stretch reads TRVIVKTAGN…IYLVIKSKQG (75 aa). Disordered regions lie at residues 113–138 and 305–325; these read FRDLPTNDPCHRDRNTKGNSSRVHQP and QVQSSPPPPPPSQEQQDQLTQ. The span at 129 to 138 shows a compositional bias: polar residues; sequence KGNSSRVHQP.

This chain is Ubiquilin-like protein (UBQLNL), found in Homo sapiens (Human).